The primary structure comprises 540 residues: Light-independent protochlorophyllide reductase subunit B (540 aa).

Asp36 is a binding site for [4Fe-4S] cluster. Asp287 serves as the catalytic Proton donor. Residue 422 to 423 coordinates substrate; that stretch reads GL.

Belongs to the ChlB/BchB/BchZ family. As to quaternary structure, protochlorophyllide reductase is composed of three subunits; BchL, BchN and BchB. Forms a heterotetramer of two BchB and two BchN subunits. The cofactor is [4Fe-4S] cluster.

It catalyses the reaction chlorophyllide a + oxidized 2[4Fe-4S]-[ferredoxin] + 2 ADP + 2 phosphate = protochlorophyllide a + reduced 2[4Fe-4S]-[ferredoxin] + 2 ATP + 2 H2O. The protein operates within porphyrin-containing compound metabolism; bacteriochlorophyll biosynthesis (light-independent). Functionally, component of the dark-operative protochlorophyllide reductase (DPOR) that uses Mg-ATP and reduced ferredoxin to reduce ring D of protochlorophyllide (Pchlide) to form chlorophyllide a (Chlide). This reaction is light-independent. The NB-protein (BchN-BchB) is the catalytic component of the complex. The sequence is that of Light-independent protochlorophyllide reductase subunit B from Rhodopseudomonas palustris (strain TIE-1).